We begin with the raw amino-acid sequence, 480 residues long: Argininosuccinate lyase (480 aa).

The protein belongs to the lyase 1 family. Argininosuccinate lyase subfamily.

It localises to the cytoplasm. The enzyme catalyses 2-(N(omega)-L-arginino)succinate = fumarate + L-arginine. It functions in the pathway amino-acid biosynthesis; L-arginine biosynthesis; L-arginine from L-ornithine and carbamoyl phosphate: step 3/3. The chain is Argininosuccinate lyase from Ruthia magnifica subsp. Calyptogena magnifica.